The primary structure comprises 263 residues: Ribonuclease HII (263 aa).

Residues 71 to 262 form the RNase H type-2 domain; that stretch reads QAIAGIDEVG…VKSMCCDSTN (192 aa). A divalent metal cation is bound by residues aspartate 77, glutamate 78, and aspartate 172.

This sequence belongs to the RNase HII family. Requires Mn(2+) as cofactor. Mg(2+) serves as cofactor.

Its subcellular location is the cytoplasm. The catalysed reaction is Endonucleolytic cleavage to 5'-phosphomonoester.. Endonuclease that specifically degrades the RNA of RNA-DNA hybrids. The protein is Ribonuclease HII of Streptococcus pyogenes serotype M12 (strain MGAS2096).